A 214-amino-acid polypeptide reads, in one-letter code: Cytochrome b (214 aa).

The next 4 helical transmembrane spans lie at 31 to 51 (FGSM…FLAI), 75 to 96 (WIMQ…YTHI), 111 to 131 (WLSG…GYVL), and 176 to 196 (FFAL…IHII). 2 residues coordinate heme b: histidine 81 and histidine 95. Heme b-binding residues include histidine 180 and histidine 194. Histidine 199 contacts a ubiquinone.

This sequence belongs to the cytochrome b family. As to quaternary structure, the cytochrome bc1 complex contains 3 respiratory subunits (MT-CYB, CYC1 and UQCRFS1), 2 core proteins (UQCRC1 and UQCRC2) and probably 6 low-molecular weight proteins. The cofactor is heme b.

The protein resides in the mitochondrion inner membrane. Component of the ubiquinol-cytochrome c reductase complex (complex III or cytochrome b-c1 complex) that is part of the mitochondrial respiratory chain. The b-c1 complex mediates electron transfer from ubiquinol to cytochrome c. Contributes to the generation of a proton gradient across the mitochondrial membrane that is then used for ATP synthesis. The chain is Cytochrome b (MT-CYB) from Cerastes cerastes (Horned desert viper).